Reading from the N-terminus, the 1052-residue chain is Carboxylic acid reductase (1052 aa).

Residues 21–344 (RALNEPNREW…ATEFTPFPFY (324 aa)) are adenylation (A) domain. Residues 334-335 (SA), Thr-339, and 419-422 (YQGR) each bind AMP. A Carrier domain is found at 560 to 643 (SSSDALIVSI…RLADYLLSIV (84 aa)). Position 595 is an O-(pantetheine 4'-phosphoryl)serine (Ser-595). The tract at residues 684–979 (GQVVVITGTT…QKIVPLDEWL (296 aa)) is carboxylic acid reductase (R) domain. Residues 693-696 (TGGI), Arg-718, 774-776 (NQW), Ser-814, Tyr-844, and Lys-848 contribute to the NADP(+) site.

It belongs to the adenylate-forming reductase family. It depends on Mg(2+) as a cofactor.

It catalyses the reaction an aromatic aldehyde + AMP + diphosphate + NADP(+) = an aromatic carboxylate + ATP + NADPH + H(+). The enzyme catalyses a carboxylate + ATP + NADPH + H(+) = an aldehyde + AMP + diphosphate + NADP(+). The catalysed reaction is benzoate + ATP + NADPH + H(+) = benzaldehyde + AMP + diphosphate + NADP(+). It carries out the reaction (E)-cinnamate + ATP + NADPH + H(+) = (E)-cinnamaldehyde + AMP + diphosphate + NADP(+). It catalyses the reaction piperonylate + ATP + NADPH + H(+) = piperonal + AMP + diphosphate + NADP(+). The enzyme catalyses salicylate + ATP + NADPH + H(+) = salicylaldehyde + AMP + diphosphate + NADP(+). The catalysed reaction is 3-hydroxybenzoate + ATP + NADPH + H(+) = 3-hydroxybenzaldehyde + AMP + diphosphate + NADP(+). It carries out the reaction 2-methoxybenzoate + ATP + NADPH + H(+) = 2-methoxybenzaldehyde + AMP + diphosphate + NADP(+). It catalyses the reaction 3-methoxybenzoate + ATP + NADPH + H(+) = 3-methoxybenzaldehyde + AMP + diphosphate + NADP(+). The enzyme catalyses 4-hydroxybenzoate + ATP + NADPH + H(+) = 4-hydroxybenzaldehyde + AMP + diphosphate + NADP(+). The catalysed reaction is 4-methoxybenzoate + ATP + NADPH + H(+) = 4-methoxybenzaldehyde + AMP + diphosphate + NADP(+). It carries out the reaction 3-phenylpropanoate + ATP + NADPH + H(+) = 3-phenylpropanal + AMP + diphosphate + NADP(+). It catalyses the reaction picolinate + ATP + NADPH + H(+) = picolinal + AMP + diphosphate + NADP(+). The enzyme catalyses propanoate + ATP + NADPH + H(+) = propanal + AMP + diphosphate + NADP(+). The catalysed reaction is butanoate + ATP + NADPH + H(+) = butanal + AMP + diphosphate + NADP(+). It carries out the reaction pentanoate + ATP + NADPH + H(+) = pentanal + AMP + diphosphate + NADP(+). It catalyses the reaction hexanoate + ATP + NADPH + H(+) = hexanal + AMP + diphosphate + NADP(+). The enzyme catalyses heptanoate + ATP + NADPH + H(+) = heptanal + AMP + diphosphate + NADP(+). The catalysed reaction is octanoate + ATP + NADPH + H(+) = octanal + AMP + diphosphate + NADP(+). It carries out the reaction nonanoate + ATP + NADPH + H(+) = nonanal + AMP + diphosphate + NADP(+). Carboxylic acid reductase that shows a broad range of substrate specificity towards aromatic acids, especially to phenyl carboxylic and phenyl acrylic acids, to convert them into their respective aldehydes. Also able to use aliphatic acids as substrates. This Neurospora crassa (strain ATCC 24698 / 74-OR23-1A / CBS 708.71 / DSM 1257 / FGSC 987) protein is Carboxylic acid reductase.